Here is a 386-residue protein sequence, read N- to C-terminus: Patatin-T5 (386 aa).

The first 23 residues, 1 to 23 (MATTNSFTILIFMILATTSSTFA), serve as a signal peptide directing secretion. Residues 32–229 (LSIDGGGIKG…TVDDPALLSI (198 aa)) enclose the PNPLA domain. Residues 36–41 (GGGIKG) carry the GXGXXG motif. The N-linked (GlcNAc...) asparagine glycan is linked to Asn60. The short motif at 75–79 (GTSTG) is the GXSXG element. Ser77 acts as the Nucleophile in catalysis. 2 N-linked (GlcNAc...) asparagine glycosylation sites follow: Asn90 and Asn202. Residue Asp215 is the Proton acceptor of the active site. The DGA/G signature appears at 215-217 (DGA).

The protein belongs to the patatin family. In terms of processing, N-glycosylated. As to expression, tuber and stolon.

The protein resides in the vacuole. Functionally, probable lipolytic acyl hydrolase (LAH), an activity which is thought to be involved in the response of tubers to pathogens. The protein is Patatin-T5 of Solanum tuberosum (Potato).